Consider the following 149-residue polypeptide: MTVFKEILDNIANIKNVESYQIENIHLTSDDVLKRVIIISSDQNVEYGIRLEEDKKLMDGDILYKDDYKLVVIRLELSDVLIITAHTIGEMAKIAHNLGNRHMPAQFTETQMIVPYDYLVEEYLQDNKALYERKKIKLKEAFKHCSDAK.

Belongs to the UreE family.

It localises to the cytoplasm. Involved in urease metallocenter assembly. Binds nickel. Probably functions as a nickel donor during metallocenter assembly. This Ureaplasma parvum serovar 3 (strain ATCC 700970) protein is Urease accessory protein UreE.